The sequence spans 156 residues: ATP synthase subunit b (156 aa).

A helical membrane pass occupies residues 12-32; that stretch reads IAFAIFVLFCMKFIWPALMGA.

This sequence belongs to the ATPase B chain family. As to quaternary structure, F-type ATPases have 2 components, F(1) - the catalytic core - and F(0) - the membrane proton channel. F(1) has five subunits: alpha(3), beta(3), gamma(1), delta(1), epsilon(1). F(0) has three main subunits: a(1), b(2) and c(10-14). The alpha and beta chains form an alternating ring which encloses part of the gamma chain. F(1) is attached to F(0) by a central stalk formed by the gamma and epsilon chains, while a peripheral stalk is formed by the delta and b chains.

The protein localises to the cell inner membrane. Functionally, f(1)F(0) ATP synthase produces ATP from ADP in the presence of a proton or sodium gradient. F-type ATPases consist of two structural domains, F(1) containing the extramembraneous catalytic core and F(0) containing the membrane proton channel, linked together by a central stalk and a peripheral stalk. During catalysis, ATP synthesis in the catalytic domain of F(1) is coupled via a rotary mechanism of the central stalk subunits to proton translocation. Component of the F(0) channel, it forms part of the peripheral stalk, linking F(1) to F(0). In Psychrobacter sp. (strain PRwf-1), this protein is ATP synthase subunit b.